The chain runs to 512 residues: GMP synthase [glutamine-hydrolyzing] (512 aa).

The region spanning 7 to 197 (TIIVLDFGSQ…VFGVCGCSEG (191 aa)) is the Glutamine amidotransferase type-1 domain. Cys-84 acts as the Nucleophile in catalysis. Residues His-171 and Glu-173 contribute to the active site. The 190-residue stretch at 198–387 (WNMENFIEVE…LGIPDEIVWR (190 aa)) folds into the GMPS ATP-PPase domain. 225-231 (SGGVDSS) is an ATP binding site.

As to quaternary structure, homodimer.

It catalyses the reaction XMP + L-glutamine + ATP + H2O = GMP + L-glutamate + AMP + diphosphate + 2 H(+). It participates in purine metabolism; GMP biosynthesis; GMP from XMP (L-Gln route): step 1/1. Functionally, catalyzes the synthesis of GMP from XMP. In Bacillus cereus (strain ATCC 10987 / NRS 248), this protein is GMP synthase [glutamine-hydrolyzing].